Consider the following 475-residue polypeptide: Ribulose bisphosphate carboxylase large chain (475 aa).

K14 carries the N6,N6,N6-trimethyllysine modification. The substrate site is built by N123 and T173. Residue K175 is the Proton acceptor of the active site. Residue K177 coordinates substrate. Mg(2+) contacts are provided by K201, D203, and E204. An N6-carboxylysine modification is found at K201. The Proton acceptor role is filled by H294. Substrate contacts are provided by R295, H327, and S379.

This sequence belongs to the RuBisCO large chain family. Type I subfamily. As to quaternary structure, heterohexadecamer of 8 large chains and 8 small chains; disulfide-linked. The disulfide link is formed within the large subunit homodimers. It depends on Mg(2+) as a cofactor. The disulfide bond which can form in the large chain dimeric partners within the hexadecamer appears to be associated with oxidative stress and protein turnover.

It is found in the plastid. It catalyses the reaction 2 (2R)-3-phosphoglycerate + 2 H(+) = D-ribulose 1,5-bisphosphate + CO2 + H2O. It carries out the reaction D-ribulose 1,5-bisphosphate + O2 = 2-phosphoglycolate + (2R)-3-phosphoglycerate + 2 H(+). RuBisCO catalyzes two reactions: the carboxylation of D-ribulose 1,5-bisphosphate, the primary event in carbon dioxide fixation, as well as the oxidative fragmentation of the pentose substrate in the photorespiration process. Both reactions occur simultaneously and in competition at the same active site. This Euglena longa (Euglenophycean alga) protein is Ribulose bisphosphate carboxylase large chain (rbcL).